The primary structure comprises 118 residues: Ribonuclease P protein component (118 aa).

This sequence belongs to the RnpA family. Consists of a catalytic RNA component (M1 or rnpB) and a protein subunit.

It carries out the reaction Endonucleolytic cleavage of RNA, removing 5'-extranucleotides from tRNA precursor.. Functionally, RNaseP catalyzes the removal of the 5'-leader sequence from pre-tRNA to produce the mature 5'-terminus. It can also cleave other RNA substrates such as 4.5S RNA. The protein component plays an auxiliary but essential role in vivo by binding to the 5'-leader sequence and broadening the substrate specificity of the ribozyme. This is Ribonuclease P protein component from Shewanella sp. (strain ANA-3).